The sequence spans 163 residues: uncharacterized protein (163 aa).

Residues 23–113 (DFPEEPPLWV…QVADGVHSQQ (91 aa)) are disordered. S102 is modified (phosphoserine).

This is an uncharacterized protein from Mus musculus (Mouse).